The chain runs to 131 residues: Small ribosomal subunit protein bS6 (131 aa).

Lysine 93 is subject to N6-acetyllysine. The disordered stretch occupies residues 98-131 (EASPMVKAKDERRERRDDFANETADDAEAGDSEE). The segment covering 104–116 (KAKDERRERRDDF) has biased composition (basic and acidic residues). The span at 120–131 (TADDAEAGDSEE) shows a compositional bias: acidic residues.

This sequence belongs to the bacterial ribosomal protein bS6 family.

Binds together with bS18 to 16S ribosomal RNA. The chain is Small ribosomal subunit protein bS6 from Escherichia fergusonii (strain ATCC 35469 / DSM 13698 / CCUG 18766 / IAM 14443 / JCM 21226 / LMG 7866 / NBRC 102419 / NCTC 12128 / CDC 0568-73).